The chain runs to 215 residues: Guanylate kinase (215 aa).

One can recognise a Guanylate kinase-like domain in the interval 6–185; sequence GAILVLSGPS…SEKLLLSIAR (180 aa). Residue 13–20 participates in ATP binding; it reads GPSGSGKS.

This sequence belongs to the guanylate kinase family.

The protein resides in the cytoplasm. It catalyses the reaction GMP + ATP = GDP + ADP. Functionally, essential for recycling GMP and indirectly, cGMP. In Wolinella succinogenes (strain ATCC 29543 / DSM 1740 / CCUG 13145 / JCM 31913 / LMG 7466 / NCTC 11488 / FDC 602W) (Vibrio succinogenes), this protein is Guanylate kinase.